Consider the following 610-residue polypeptide: UvrABC system protein C (610 aa).

The GIY-YIG domain maps to 19 to 97 (GAPGVYKMLD…IKRHKPRYNI (79 aa)). The UVR domain occupies 207-242 (EALIDRLAQRMEQAAQRLEFEKAARYRDQISNLRTV).

The protein belongs to the UvrC family. As to quaternary structure, interacts with UvrB in an incision complex.

Its subcellular location is the cytoplasm. In terms of biological role, the UvrABC repair system catalyzes the recognition and processing of DNA lesions. UvrC both incises the 5' and 3' sides of the lesion. The N-terminal half is responsible for the 3' incision and the C-terminal half is responsible for the 5' incision. The protein is UvrABC system protein C of Methylococcus capsulatus (strain ATCC 33009 / NCIMB 11132 / Bath).